The following is a 276-amino-acid chain: Phosphatidylglycerol--prolipoprotein diacylglyceryl transferase (276 aa).

The next 7 helical transmembrane spans lie at 17-37 (FGPF…VLGW), 59-79 (FLSW…ILFY), 94-114 (VWDG…AILI), 132-152 (VPVP…GELW), 177-197 (PSEL…LLIA), 208-225 (GYLG…RTTA), and 235-255 (LGYL…MIVI). Position 142 (R142) interacts with a 1,2-diacyl-sn-glycero-3-phospho-(1'-sn-glycerol).

It belongs to the Lgt family.

It localises to the cell inner membrane. The catalysed reaction is L-cysteinyl-[prolipoprotein] + a 1,2-diacyl-sn-glycero-3-phospho-(1'-sn-glycerol) = an S-1,2-diacyl-sn-glyceryl-L-cysteinyl-[prolipoprotein] + sn-glycerol 1-phosphate + H(+). It functions in the pathway protein modification; lipoprotein biosynthesis (diacylglyceryl transfer). In terms of biological role, catalyzes the transfer of the diacylglyceryl group from phosphatidylglycerol to the sulfhydryl group of the N-terminal cysteine of a prolipoprotein, the first step in the formation of mature lipoproteins. The sequence is that of Phosphatidylglycerol--prolipoprotein diacylglyceryl transferase from Acidiphilium cryptum (strain JF-5).